The sequence spans 97 residues: Aspartyl/glutamyl-tRNA(Asn/Gln) amidotransferase subunit C (97 aa).

This sequence belongs to the GatC family. As to quaternary structure, heterotrimer of A, B and C subunits.

The catalysed reaction is L-glutamyl-tRNA(Gln) + L-glutamine + ATP + H2O = L-glutaminyl-tRNA(Gln) + L-glutamate + ADP + phosphate + H(+). It carries out the reaction L-aspartyl-tRNA(Asn) + L-glutamine + ATP + H2O = L-asparaginyl-tRNA(Asn) + L-glutamate + ADP + phosphate + 2 H(+). Its function is as follows. Allows the formation of correctly charged Asn-tRNA(Asn) or Gln-tRNA(Gln) through the transamidation of misacylated Asp-tRNA(Asn) or Glu-tRNA(Gln) in organisms which lack either or both of asparaginyl-tRNA or glutaminyl-tRNA synthetases. The reaction takes place in the presence of glutamine and ATP through an activated phospho-Asp-tRNA(Asn) or phospho-Glu-tRNA(Gln). The polypeptide is Aspartyl/glutamyl-tRNA(Asn/Gln) amidotransferase subunit C (Listeria welshimeri serovar 6b (strain ATCC 35897 / DSM 20650 / CCUG 15529 / CIP 8149 / NCTC 11857 / SLCC 5334 / V8)).